Reading from the N-terminus, the 261-residue chain is Acetylglutamate kinase (261 aa).

Residues 41–42 (GG), R63, and N157 each bind substrate.

The protein belongs to the acetylglutamate kinase family. ArgB subfamily.

The protein localises to the cytoplasm. It carries out the reaction N-acetyl-L-glutamate + ATP = N-acetyl-L-glutamyl 5-phosphate + ADP. It participates in amino-acid biosynthesis; L-arginine biosynthesis; N(2)-acetyl-L-ornithine from L-glutamate: step 2/4. Functionally, catalyzes the ATP-dependent phosphorylation of N-acetyl-L-glutamate. The chain is Acetylglutamate kinase from Koribacter versatilis (strain Ellin345).